A 206-amino-acid polypeptide reads, in one-letter code: Glutathione S-transferase 1 (206 aa).

Residues 2 to 79 enclose the GST N-terminal domain; that stretch reads PQYKLTYFDI…YLGRQFGLAG (78 aa). Glutathione is bound by residues Tyr-8, Trp-39, Lys-43, 49 to 51, and 63 to 64; these read GQL and QS. A GST C-terminal domain is found at 81-206; it reads TPMEEAQVDS…WIAERPKTPY (126 aa).

Belongs to the GST superfamily. Sigma family.

The enzyme catalyses RX + glutathione = an S-substituted glutathione + a halide anion + H(+). Conjugation of reduced glutathione to a wide number of exogenous and endogenous hydrophobic electrophiles. Can also function as a GSH peroxidase. The protein is Glutathione S-transferase 1 (GST1) of Ascaris suum (Pig roundworm).